The following is a 164-amino-acid chain: MKCKPNQTRTYDPEGFKKRAACLCFRSEREDEVLLVSSSRYPDRWIVPGGGMEPEEEPGGAAVREVFEEAGVKGKLGRLLGNFEQNQDRKHRTYVYVLTVTEILEDWEDSVSIGRKREWFKVEDAIKVLQCHKPVHAEYLQKLKLGGSPTNGNSVAPSPPEGDP.

Residues Arg-9, 17 to 19, and 38 to 40 each bind substrate; these read KKR and SSR. One can recognise a Nudix hydrolase domain in the interval 17 to 144; sequence KKRAACLCFR…VHAEYLQKLK (128 aa). Gly-49 and Glu-65 together coordinate Mg(2+). The Nudix box signature appears at 50 to 71; sequence GGMEPEEEPGGAAVREVFEEAG. Residue Glu-68 is the Proton acceptor of the active site. Glu-69 is a Mg(2+) binding site. Substrate contacts are provided by residues 89–91, Arg-115, and Lys-133; that span reads RKH. The interval 144 to 164 is disordered; the sequence is KLGGSPTNGNSVAPSPPEGDP.

It belongs to the Nudix hydrolase family. DIPP subfamily. The cofactor is Mg(2+). Requires Mn(2+) as cofactor.

Its subcellular location is the cytoplasm. The catalysed reaction is diphospho-myo-inositol polyphosphate + H2O = myo-inositol polyphosphate + phosphate.. It catalyses the reaction P(1),P(6)-bis(5'-adenosyl) hexaphosphate + H2O = adenosine 5'-pentaphosphate + AMP + 2 H(+). It carries out the reaction P(1),P(5)-bis(5'-adenosyl) pentaphosphate + H2O = adenosine 5'-tetraphosphate + AMP + 2 H(+). In terms of biological role, cleaves a beta-phosphate from the diphosphate groups in PP-InsP5 (diphosphoinositol pentakisphosphate), suggesting that it may play a role in signal transduction. Also able to catalyze the hydrolysis of dinucleoside oligophosphates, with Ap6A and Ap5A being the preferred substrates. The major reaction products are ADP and p4a from Ap6A and ADP and ATP from Ap5A. Also able to hydrolyze 5-phosphoribose 1-diphosphate. The protein is Diphosphoinositol polyphosphate phosphohydrolase 3-beta of Bos taurus (Bovine).